Here is an 86-residue protein sequence, read N- to C-terminus: Small ribosomal subunit protein bS16 (86 aa).

Belongs to the bacterial ribosomal protein bS16 family.

This Methylibium petroleiphilum (strain ATCC BAA-1232 / LMG 22953 / PM1) protein is Small ribosomal subunit protein bS16.